The chain runs to 188 residues: Xanthine phosphoribosyltransferase (188 aa).

Xanthine contacts are provided by Leu-20 and Asn-27. Position 127 to 131 (127 to 131) interacts with 5-phospho-alpha-D-ribose 1-diphosphate; the sequence is ANGNA. Position 155 (Lys-155) interacts with xanthine.

It belongs to the purine/pyrimidine phosphoribosyltransferase family. Xpt subfamily. In terms of assembly, homodimer.

The protein resides in the cytoplasm. It carries out the reaction XMP + diphosphate = xanthine + 5-phospho-alpha-D-ribose 1-diphosphate. It participates in purine metabolism; XMP biosynthesis via salvage pathway; XMP from xanthine: step 1/1. Converts the preformed base xanthine, a product of nucleic acid breakdown, to xanthosine 5'-monophosphate (XMP), so it can be reused for RNA or DNA synthesis. This chain is Xanthine phosphoribosyltransferase, found in Phocaeicola vulgatus (strain ATCC 8482 / DSM 1447 / JCM 5826 / CCUG 4940 / NBRC 14291 / NCTC 11154) (Bacteroides vulgatus).